Reading from the N-terminus, the 274-residue chain is 3-methyl-2-oxobutanoate hydroxymethyltransferase (274 aa).

Residues aspartate 49 and aspartate 88 each coordinate Mg(2+). 3-methyl-2-oxobutanoate-binding positions include 49–50 (DS), aspartate 88, and lysine 118. Residue glutamate 120 coordinates Mg(2+). The Proton acceptor role is filled by glutamate 187.

This sequence belongs to the PanB family. In terms of assembly, homodecamer; pentamer of dimers. Requires Mg(2+) as cofactor.

The protein resides in the cytoplasm. It carries out the reaction 3-methyl-2-oxobutanoate + (6R)-5,10-methylene-5,6,7,8-tetrahydrofolate + H2O = 2-dehydropantoate + (6S)-5,6,7,8-tetrahydrofolate. The protein operates within cofactor biosynthesis; (R)-pantothenate biosynthesis; (R)-pantoate from 3-methyl-2-oxobutanoate: step 1/2. Functionally, catalyzes the reversible reaction in which hydroxymethyl group from 5,10-methylenetetrahydrofolate is transferred onto alpha-ketoisovalerate to form ketopantoate. The chain is 3-methyl-2-oxobutanoate hydroxymethyltransferase from Rhodopseudomonas palustris (strain BisB18).